We begin with the raw amino-acid sequence, 285 residues long: NAD kinase (285 aa).

Asp66 serves as the catalytic Proton acceptor. Residues 66-67 (DG), 137-138 (ND), Arg148, Arg165, Asp167, and 178-183 (TAYSMS) each bind NAD(+).

This sequence belongs to the NAD kinase family. A divalent metal cation is required as a cofactor.

It is found in the cytoplasm. It carries out the reaction NAD(+) + ATP = ADP + NADP(+) + H(+). Its function is as follows. Involved in the regulation of the intracellular balance of NAD and NADP, and is a key enzyme in the biosynthesis of NADP. Catalyzes specifically the phosphorylation on 2'-hydroxyl of the adenosine moiety of NAD to yield NADP. The polypeptide is NAD kinase (Chlorobium phaeobacteroides (strain DSM 266 / SMG 266 / 2430)).